The following is an 879-amino-acid chain: Translation initiation factor IF-2 (879 aa).

The tract at residues 48 to 261 is disordered; the sequence is EAFPPPPEPA…RPHKSKKQRR (214 aa). Residues 82–111 show a composition bias toward low complexity; sequence PAADAAAPPAVTTPPSAAPAGATTSAPSDA. Composition is skewed to pro residues over residues 119 to 142, 152 to 163, and 173 to 197; these read PPRPVKLPQPPRPAPAVPKPPSGP, SPMPRPMPPRPV, and PGIPRPPLRPGAPGRPTPGAMPPRP. The segment covering 198–213 has biased composition (low complexity); the sequence is AAGRAAPGRGAPIRLP. Residues 228-246 are compositionally biased toward gly residues; sequence PGVGGRGRGAPGGAFGRGP. The span at 251 to 260 shows a compositional bias: basic residues; sequence SRPHKSKKQR. In terms of domain architecture, tr-type G spans 372-543; the sequence is PRPPVVTVMG…AILLTADAAL (172 aa). Residues 381–388 are G1; the sequence is GHVDHGKT. Residue 381–388 coordinates GTP; that stretch reads GHVDHGKT. A G2 region spans residues 406-410; sequence GITQH. The G3 stretch occupies residues 431–434; that stretch reads DTPG. GTP is bound by residues 431–435 and 485–488; these read DTPGH and NKID. The segment at 485–488 is G4; sequence NKID. The interval 521–523 is G5; the sequence is SAL.

The protein belongs to the TRAFAC class translation factor GTPase superfamily. Classic translation factor GTPase family. IF-2 subfamily.

It is found in the cytoplasm. Functionally, one of the essential components for the initiation of protein synthesis. Protects formylmethionyl-tRNA from spontaneous hydrolysis and promotes its binding to the 30S ribosomal subunits. Also involved in the hydrolysis of GTP during the formation of the 70S ribosomal complex. The sequence is that of Translation initiation factor IF-2 from Acidothermus cellulolyticus (strain ATCC 43068 / DSM 8971 / 11B).